Consider the following 357-residue polypeptide: Prostaglandin E2 receptor EP2 subtype (357 aa).

Residues 1–24 (MDNSFNDSRRVENCESRQYLLSDE) lie on the Extracellular side of the membrane. The N-linked (GlcNAc...) asparagine glycan is linked to N6. A helical membrane pass occupies residues 25–48 (SPAISSVMFTAGVLGNLIALALLA). Over 49–66 (RRWRGDTGCSAGSRTSIS) the chain is Cytoplasmic. The helical transmembrane segment at 67-92 (LFHVLVTELVLTDLLGTCLISPVVLA) threads the bilayer. Residues 93–112 (SYSRNQTLVALAPESRACTY) are Extracellular-facing. A disulfide bridge links C110 with C188. Residues 113 to 133 (FAFTMTFFSLATMLMLFAMAL) form a helical membrane-spanning segment. At 134-152 (ERYLAIGHPYFYRRRVSRR) the chain is on the cytoplasmic side. The chain crosses the membrane as a helical span at residues 153–177 (GGLAVLPAIYGVSLLFCSLPLLNYG). The Extracellular portion of the chain corresponds to 178–199 (EYVQYCPGTWCFIQHGRTAYLQ). The chain crosses the membrane as a helical span at residues 200–224 (LYATVLLLLIVAVLGCNISVILNLI). Topologically, residues 225-262 (RMQLRSKRSRCGLSGSSLRGPGSRRRGERTSMAEETDH) are cytoplasmic. Residues 235-245 (CGLSGSSLRGP) show a composition bias toward low complexity. The tract at residues 235–255 (CGLSGSSLRGPGSRRRGERTS) is disordered. Residues 263–286 (LILLAIMTITFAVCSLPFTIFAYM) traverse the membrane as a helical segment. The Extracellular portion of the chain corresponds to 287-299 (DETSSRKEKWDLR). A helical transmembrane segment spans residues 300–323 (ALRFLSVNSIIDPWVFVILRPPVL). Residues 324-357 (RLMRSVLCCRTSLRAPEAPGASCSTQQTDLCGQL) lie on the Cytoplasmic side of the membrane.

This sequence belongs to the G-protein coupled receptor 1 family.

The protein localises to the cell membrane. In terms of biological role, receptor for prostaglandin E2 (PGE2). The activity of this receptor is mediated by G(s) proteins that stimulate adenylate cyclase. The subsequent raise in intracellular cAMP is responsible for the relaxing effect of this receptor on smooth muscle. The sequence is that of Prostaglandin E2 receptor EP2 subtype (Ptger2) from Rattus norvegicus (Rat).